A 172-amino-acid chain; its full sequence is Large ribosomal subunit protein uL10 (172 aa).

Belongs to the universal ribosomal protein uL10 family. Part of the ribosomal stalk of the 50S ribosomal subunit. The N-terminus interacts with L11 and the large rRNA to form the base of the stalk. The C-terminus forms an elongated spine to which L12 dimers bind in a sequential fashion forming a multimeric L10(L12)X complex.

Forms part of the ribosomal stalk, playing a central role in the interaction of the ribosome with GTP-bound translation factors. The polypeptide is Large ribosomal subunit protein uL10 (Chlamydia trachomatis serovar L2 (strain ATCC VR-902B / DSM 19102 / 434/Bu)).